A 102-amino-acid polypeptide reads, in one-letter code: Small ribosomal subunit protein uS14 (102 aa).

This sequence belongs to the universal ribosomal protein uS14 family. As to quaternary structure, part of the 30S ribosomal subunit. Contacts proteins S3 and S10.

In terms of biological role, binds 16S rRNA, required for the assembly of 30S particles and may also be responsible for determining the conformation of the 16S rRNA at the A site. The protein is Small ribosomal subunit protein uS14 of Wolbachia pipientis subsp. Culex pipiens (strain wPip).